Reading from the N-terminus, the 357-residue chain is Chaperone protein DnaJ (357 aa).

One can recognise a J domain in the interval 4–69 (DYYAILGVDR…QKRKQYDETG (66 aa)). The CR-type zinc-finger motif lies at 132–213 (GASKNVKYRR…CHGTGTVSKN (82 aa)). Zn(2+) is bound by residues Cys-145, Cys-148, Cys-161, Cys-164, Cys-187, Cys-190, Cys-201, and Cys-204. CXXCXGXG motif repeat units lie at residues 145 to 152 (CEHCSGTG), 161 to 168 (CPTCHGSG), 187 to 194 (CRTCHGRG), and 201 to 208 (CTVCHGTG).

This sequence belongs to the DnaJ family. In terms of assembly, homodimer. The cofactor is Zn(2+).

The protein resides in the cytoplasm. Its function is as follows. Participates actively in the response to hyperosmotic and heat shock by preventing the aggregation of stress-denatured proteins and by disaggregating proteins, also in an autonomous, DnaK-independent fashion. Unfolded proteins bind initially to DnaJ; upon interaction with the DnaJ-bound protein, DnaK hydrolyzes its bound ATP, resulting in the formation of a stable complex. GrpE releases ADP from DnaK; ATP binding to DnaK triggers the release of the substrate protein, thus completing the reaction cycle. Several rounds of ATP-dependent interactions between DnaJ, DnaK and GrpE are required for fully efficient folding. Also involved, together with DnaK and GrpE, in the DNA replication of plasmids through activation of initiation proteins. The protein is Chaperone protein DnaJ of Picrophilus torridus (strain ATCC 700027 / DSM 9790 / JCM 10055 / NBRC 100828 / KAW 2/3).